A 69-amino-acid chain; its full sequence is Putative transmembrane protein ORF34 (69 aa).

2 helical membrane-spanning segments follow: residues 7–27 and 42–62; these read LLSV…MMQF and VSLM…IVYF.

Its subcellular location is the host membrane. This chain is Putative transmembrane protein ORF34, found in Haloarcula hispanica (His1V).